A 200-amino-acid polypeptide reads, in one-letter code: Bombinin-like peptides 3 (200 aa).

Residues 1–16 (MNFKYIVAVSILIASA) constitute a signal peptide (or 18). Phenylalanine amide occurs at positions 68 and 129.

The protein belongs to the bombinin family. As to expression, expressed by the skin glands.

It is found in the secreted. Its function is as follows. Has antimicrobial activity, but no hemolytic activity. Preference on killing Gram-negative non-enteric bacteria. The sequence is that of Bombinin-like peptides 3 from Bombina orientalis (Oriental fire-bellied toad).